Here is a 137-residue protein sequence, read N- to C-terminus: Acidic phospholipase A2 beta-bungarotoxin A6 chain (137 aa).

The N-terminal stretch at 1 to 9 is a signal peptide; sequence AVCVSLLGA. The propeptide occupies 10 to 17; that stretch reads ANIPPQHL. Intrachain disulfides connect C44–C136, C46–C62, C61–C117, C68–C110, C78–C103, and C96–C108. The Ca(2+) site is built by Y45, G47, and G49. The active site involves H65. Position 66 (D66) interacts with Ca(2+). Residue D111 is part of the active site.

The protein belongs to the phospholipase A2 family. Group I subfamily. D49 sub-subfamily. As to quaternary structure, heterodimer; disulfide-linked. The A chains have phospholipase A2 activity and the B chains show homology with the basic protease inhibitors. Ca(2+) serves as cofactor. As to expression, expressed by the venom gland.

It is found in the secreted. The enzyme catalyses a 1,2-diacyl-sn-glycero-3-phosphocholine + H2O = a 1-acyl-sn-glycero-3-phosphocholine + a fatty acid + H(+). Its function is as follows. Snake venom phospholipase A2 (PLA2) that inhibits neuromuscular transmission by blocking acetylcholine release from the nerve termini. PLA2 catalyzes the calcium-dependent hydrolysis of the 2-acyl groups in 3-sn-phosphoglycerides. This chain is Acidic phospholipase A2 beta-bungarotoxin A6 chain, found in Bungarus multicinctus (Many-banded krait).